We begin with the raw amino-acid sequence, 230 residues long: uncharacterized protein (230 aa).

The N-terminal stretch at 1 to 16 is a signal peptide; sequence MTCVNVCFFLFPPCHR. 4 consecutive transmembrane segments (helical) span residues 27 to 47, 118 to 138, 150 to 170, and 172 to 191; these read VDLLIPSLCCSLAVFPSIPLI, LFFFFLLFFLSFSFSFSFLFF, FPILHFLFFFFLCVCVFLSFL, and SLSHLLSLAILFLPLLLRVF.

It is found in the cytoplasm. Its subcellular location is the nucleus membrane. This is an uncharacterized protein from Schizosaccharomyces pombe (strain 972 / ATCC 24843) (Fission yeast).